Consider the following 191-residue polypeptide: A-type ATP synthase subunit E (191 aa).

Belongs to the V-ATPase E subunit family. Has multiple subunits with at least A(3), B(3), C, D, E, F, H, I and proteolipid K(x). In terms of processing, the N-terminus is blocked.

Its subcellular location is the cell membrane. In terms of biological role, component of the A-type ATP synthase that produces ATP from ADP in the presence of a proton gradient across the membrane. The protein is A-type ATP synthase subunit E of Sulfurisphaera tokodaii (strain DSM 16993 / JCM 10545 / NBRC 100140 / 7) (Sulfolobus tokodaii).